A 724-amino-acid polypeptide reads, in one-letter code: Phosphoribosylformylglycinamidine synthase subunit PurL (724 aa).

His-34 is a catalytic residue. ATP is bound at residue Tyr-37. Glu-78 provides a ligand contact to Mg(2+). Substrate contacts are provided by residues 79–82 (SHNH) and Arg-101. The Proton acceptor role is filled by His-80. Asp-102 contributes to the Mg(2+) binding site. Gln-226 contributes to the substrate binding site. Asp-254 contacts Mg(2+). 298–300 (ESQ) serves as a coordination point for substrate. The ATP site is built by Asp-480 and Gly-517. A Mg(2+)-binding site is contributed by Asn-518. Substrate is bound at residue Ser-520.

It belongs to the FGAMS family. Monomer. Part of the FGAM synthase complex composed of 1 PurL, 1 PurQ and 2 PurS subunits.

Its subcellular location is the cytoplasm. It catalyses the reaction N(2)-formyl-N(1)-(5-phospho-beta-D-ribosyl)glycinamide + L-glutamine + ATP + H2O = 2-formamido-N(1)-(5-O-phospho-beta-D-ribosyl)acetamidine + L-glutamate + ADP + phosphate + H(+). It functions in the pathway purine metabolism; IMP biosynthesis via de novo pathway; 5-amino-1-(5-phospho-D-ribosyl)imidazole from N(2)-formyl-N(1)-(5-phospho-D-ribosyl)glycinamide: step 1/2. Functionally, part of the phosphoribosylformylglycinamidine synthase complex involved in the purines biosynthetic pathway. Catalyzes the ATP-dependent conversion of formylglycinamide ribonucleotide (FGAR) and glutamine to yield formylglycinamidine ribonucleotide (FGAM) and glutamate. The FGAM synthase complex is composed of three subunits. PurQ produces an ammonia molecule by converting glutamine to glutamate. PurL transfers the ammonia molecule to FGAR to form FGAM in an ATP-dependent manner. PurS interacts with PurQ and PurL and is thought to assist in the transfer of the ammonia molecule from PurQ to PurL. In Methanopyrus kandleri (strain AV19 / DSM 6324 / JCM 9639 / NBRC 100938), this protein is Phosphoribosylformylglycinamidine synthase subunit PurL.